The primary structure comprises 212 residues: Disintegrin-like halysetin (212 aa).

Residues 4–90 form the Disintegrin domain; that stretch reads PPVCGNELLE…ECPADVFHKN (87 aa). Disulfide bonds link C7–C26, C18–C36, C62–C82, C69–C94, C101–C106, C113–C128, C151–C158, C163–C174, and C200–C205. Positions 68–70 match the D/ECD-tripeptide motif; the sequence is ECD.

It belongs to the venom metalloproteinase (M12B) family. P-III subfamily. P-IIIb sub-subfamily. As to quaternary structure, monomer. As to expression, expressed by the venom gland.

It is found in the secreted. Inhibits human platelet aggregation stimulated by collagen with an IC(50) of 420 nM. The chain is Disintegrin-like halysetin from Gloydius halys (Chinese water mocassin).